Here is a 430-residue protein sequence, read N- to C-terminus: MTTLIKNAQVWQAGQLQTTDILIAEGRIKAIGHQLHDQFGPADHVICADQHFVSPGFVDVHVHLRDPGQTAKETIATGTLAAAHGGFTTVGAMPNVDPVPDTPERVATMVARNQQEAHVHVAQYASITTGRTSEQLVDFAGIKAAGAFAVSNDGSGVQTAGTMFAAMQGAAKVGLPLAAHVEDDSLYHHGVMNAGPVADRLGLPGINNVSEAAQVARDVMLAEASGVHYHVCHVSTAESLRVIRNAKAAGINVTCEVSPHHLLLCDEDITMDNPMLKMNPPLRSAKDRAALVAGLLDGTIDMIATDHAPHTDAEKQGSMKTAAFGITGIETAFATLYTALVKTRLLTLGRLIELMSTRPAELFGLNTAGRLVVGAPADLTIIDLDHQYEIEAATMLSKGHNSPFIGWPVYGNVLMTLVDGKLAYGKETQA.

The Zn(2+) site is built by H61 and H63. Residues 63-65 (HLR) and N95 contribute to the substrate site. Positions 153, 180, and 233 each coordinate Zn(2+). N279 serves as a coordination point for substrate. D306 contributes to the Zn(2+) binding site. The active site involves D306. Residues H310 and 324 to 325 (FG) contribute to the substrate site.

This sequence belongs to the metallo-dependent hydrolases superfamily. DHOase family. Class I DHOase subfamily. Requires Zn(2+) as cofactor.

It carries out the reaction (S)-dihydroorotate + H2O = N-carbamoyl-L-aspartate + H(+). It functions in the pathway pyrimidine metabolism; UMP biosynthesis via de novo pathway; (S)-dihydroorotate from bicarbonate: step 3/3. Catalyzes the reversible cyclization of carbamoyl aspartate to dihydroorotate. This is Dihydroorotase from Lactiplantibacillus plantarum (strain ATCC BAA-793 / NCIMB 8826 / WCFS1) (Lactobacillus plantarum).